The sequence spans 361 residues: 3-dehydroquinate synthase (361 aa).

It belongs to the archaeal-type DHQ synthase family.

The enzyme catalyses 2-amino-2,3,7-trideoxy-D-lyxo-hept-6-ulosonate + NAD(+) + H2O = 3-dehydroquinate + NH4(+) + NADH + H(+). Its function is as follows. Catalyzes the oxidative deamination and cyclization of 2-amino-3,7-dideoxy-D-threo-hept-6-ulosonic acid (ADH) to yield 3-dehydroquinate (DHQ), which is fed into the canonical shikimic pathway of aromatic amino acid biosynthesis. The polypeptide is 3-dehydroquinate synthase (aroB') (Methanocaldococcus jannaschii (strain ATCC 43067 / DSM 2661 / JAL-1 / JCM 10045 / NBRC 100440) (Methanococcus jannaschii)).